The chain runs to 874 residues: Alanine--tRNA ligase (874 aa).

Zn(2+) contacts are provided by histidine 562, histidine 566, cysteine 663, and histidine 667.

It belongs to the class-II aminoacyl-tRNA synthetase family. The cofactor is Zn(2+).

It localises to the cytoplasm. The enzyme catalyses tRNA(Ala) + L-alanine + ATP = L-alanyl-tRNA(Ala) + AMP + diphosphate. Catalyzes the attachment of alanine to tRNA(Ala) in a two-step reaction: alanine is first activated by ATP to form Ala-AMP and then transferred to the acceptor end of tRNA(Ala). Also edits incorrectly charged Ser-tRNA(Ala) and Gly-tRNA(Ala) via its editing domain. The sequence is that of Alanine--tRNA ligase from Bordetella bronchiseptica (strain ATCC BAA-588 / NCTC 13252 / RB50) (Alcaligenes bronchisepticus).